The sequence spans 205 residues: MVNLAAMVWRRLLRKRWVLALVFGLSLVYFLSSTFKQEERAVRDRNLLQVHDHNQPIPWKVQFNLGNSSRPSNQCRNSIQGKHLITDELGYVCERKDLLVNGCCNVNVPSTKQYCCDGCWPNGCCSAYEYCVSCCLQPNKQLLLERFLNRAAVAFQNLFMAVEDHFELCLAKCRTSSQSVQHENTYRDPIAKYCYGESPPELFPA.

The Cytoplasmic portion of the chain corresponds to 1–16 (MVNLAAMVWRRLLRKR). The helical transmembrane segment at 17-35 (WVLALVFGLSLVYFLSSTF) threads the bilayer. The Lumenal segment spans residues 36-205 (KQEERAVRDR…GESPPELFPA (170 aa)). Residue N67 is glycosylated (N-linked (GlcNAc...) asparagine).

Belongs to the SPRING family. In terms of assembly, interacts with SCAP.

The protein localises to the golgi apparatus membrane. Functionally, positively regulates hepatic SREBP signaling pathway by modulating the proper localization of SCAP (SREBP cleavage-activating protein) to the endoplasmic reticulum, thereby controlling the level of functional SCAP. The protein is SREBP regulating gene protein of Homo sapiens (Human).